The primary structure comprises 171 residues: ATP synthase subunit b (171 aa).

Residues 32–52 (FFAVLLIFLIVLGVIAKWVVP) form a helical membrane-spanning segment.

It belongs to the ATPase B chain family. In terms of assembly, F-type ATPases have 2 components, F(1) - the catalytic core - and F(0) - the membrane proton channel. F(1) has five subunits: alpha(3), beta(3), gamma(1), delta(1), epsilon(1). F(0) has three main subunits: a(1), b(2) and c(10-14). The alpha and beta chains form an alternating ring which encloses part of the gamma chain. F(1) is attached to F(0) by a central stalk formed by the gamma and epsilon chains, while a peripheral stalk is formed by the delta and b chains.

The protein resides in the cell membrane. Its function is as follows. F(1)F(0) ATP synthase produces ATP from ADP in the presence of a proton or sodium gradient. F-type ATPases consist of two structural domains, F(1) containing the extramembraneous catalytic core and F(0) containing the membrane proton channel, linked together by a central stalk and a peripheral stalk. During catalysis, ATP synthesis in the catalytic domain of F(1) is coupled via a rotary mechanism of the central stalk subunits to proton translocation. Functionally, component of the F(0) channel, it forms part of the peripheral stalk, linking F(1) to F(0). This chain is ATP synthase subunit b, found in Mycolicibacterium gilvum (strain PYR-GCK) (Mycobacterium gilvum (strain PYR-GCK)).